The primary structure comprises 92 residues: Small ribosomal subunit protein uS19 (92 aa).

It belongs to the universal ribosomal protein uS19 family.

Its function is as follows. Protein S19 forms a complex with S13 that binds strongly to the 16S ribosomal RNA. The chain is Small ribosomal subunit protein uS19 from Picosynechococcus sp. (strain ATCC 27264 / PCC 7002 / PR-6) (Agmenellum quadruplicatum).